We begin with the raw amino-acid sequence, 91 residues long: Large ribosomal subunit protein uL22 (91 aa).

The protein belongs to the universal ribosomal protein uL22 family. As to quaternary structure, part of the 50S ribosomal subunit.

In terms of biological role, this protein binds specifically to 23S rRNA; its binding is stimulated by other ribosomal proteins, e.g. L4, L17, and L20. It is important during the early stages of 50S assembly. It makes multiple contacts with different domains of the 23S rRNA in the assembled 50S subunit and ribosome. Functionally, the globular domain of the protein is located near the polypeptide exit tunnel on the outside of the subunit, while an extended beta-hairpin is found that lines the wall of the exit tunnel in the center of the 70S ribosome. This is Large ribosomal subunit protein uL22 (rplV) from Loofah witches'-broom phytoplasma.